The primary structure comprises 370 residues: tRNA (guanine(26)-N(2))-dimethyltransferase (370 aa).

Residues 4-368 (TWVTEGRTTI…APLEEIRDCI (365 aa)) enclose the Trm1 methyltransferase domain. S-adenosyl-L-methionine contacts are provided by Arg-41, Arg-66, Asp-82, Asp-108, and Ala-109. Residues Cys-237, Cys-240, Cys-256, and Cys-259 each coordinate Zn(2+).

It belongs to the class I-like SAM-binding methyltransferase superfamily. Trm1 family.

It carries out the reaction guanosine(26) in tRNA + 2 S-adenosyl-L-methionine = N(2)-dimethylguanosine(26) in tRNA + 2 S-adenosyl-L-homocysteine + 2 H(+). Functionally, dimethylates a single guanine residue at position 26 of a number of tRNAs using S-adenosyl-L-methionine as donor of the methyl groups. The sequence is that of tRNA (guanine(26)-N(2))-dimethyltransferase from Methanospirillum hungatei JF-1 (strain ATCC 27890 / DSM 864 / NBRC 100397 / JF-1).